The following is a 347-amino-acid chain: Virulence plasmid protein pGP2-D (347 aa).

The sequence is that of Virulence plasmid protein pGP2-D from Chlamydia psittaci (Chlamydophila psittaci).